We begin with the raw amino-acid sequence, 210 residues long: Potassium-transporting ATPase KdpC subunit (210 aa).

Residues 13–33 (LVTLVLLLVCGLAYPLILTGI) traverse the membrane as a helical segment.

It belongs to the KdpC family. As to quaternary structure, the system is composed of three essential subunits: KdpA, KdpB and KdpC.

It localises to the cell membrane. Functionally, part of the high-affinity ATP-driven potassium transport (or Kdp) system, which catalyzes the hydrolysis of ATP coupled with the electrogenic transport of potassium into the cytoplasm. This subunit acts as a catalytic chaperone that increases the ATP-binding affinity of the ATP-hydrolyzing subunit KdpB by the formation of a transient KdpB/KdpC/ATP ternary complex. The sequence is that of Potassium-transporting ATPase KdpC subunit from Clostridium kluyveri (strain ATCC 8527 / DSM 555 / NBRC 12016 / NCIMB 10680 / K1).